The primary structure comprises 295 residues: Aspartate carbamoyltransferase catalytic subunit (295 aa).

The carbamoyl phosphate site is built by Arg-49 and Thr-50. Lys-77 is a binding site for L-aspartate. Residues Arg-99, His-127, and Gln-130 each contribute to the carbamoyl phosphate site. Residues Arg-161 and Arg-212 each contribute to the L-aspartate site. Positions 251 and 252 each coordinate carbamoyl phosphate.

This sequence belongs to the aspartate/ornithine carbamoyltransferase superfamily. ATCase family. In terms of assembly, heterododecamer (2C3:3R2) of six catalytic PyrB chains organized as two trimers (C3), and six regulatory PyrI chains organized as three dimers (R2).

It carries out the reaction carbamoyl phosphate + L-aspartate = N-carbamoyl-L-aspartate + phosphate + H(+). Its pathway is pyrimidine metabolism; UMP biosynthesis via de novo pathway; (S)-dihydroorotate from bicarbonate: step 2/3. Functionally, catalyzes the condensation of carbamoyl phosphate and aspartate to form carbamoyl aspartate and inorganic phosphate, the committed step in the de novo pyrimidine nucleotide biosynthesis pathway. The sequence is that of Aspartate carbamoyltransferase catalytic subunit from Campylobacter jejuni subsp. doylei (strain ATCC BAA-1458 / RM4099 / 269.97).